A 321-amino-acid polypeptide reads, in one-letter code: Arabinan endo-1,5-alpha-L-arabinosidase A (321 aa).

A signal peptide spans 1–19; that stretch reads MYQLLSVASVPLLASLVHG. Residue Asp-34 is the Proton acceptor of the active site. Glu-200 functions as the Proton donor in the catalytic mechanism. Asn-295 carries an N-linked (GlcNAc...) asparagine glycan.

Belongs to the glycosyl hydrolase 43 family.

The enzyme catalyses Endohydrolysis of (1-&gt;5)-alpha-arabinofuranosidic linkages in (1-&gt;5)-arabinans.. It functions in the pathway glycan metabolism; L-arabinan degradation. In terms of biological role, its preferred substrate is linear 1,5-alpha-L-arabinan. The enzyme activity is progressively reduced as 1,5-alpha-chains become shorter or more highly substituted. The chain is Arabinan endo-1,5-alpha-L-arabinosidase A (abnA) from Aspergillus niger.